Here is a 196-residue protein sequence, read N- to C-terminus: MTQRIIGLTGGIATGKTTVANYLASAHHLPIFDADIYARDAVSLGSPILDAIAGRYGKEILLPDGSLNRPKLGEIIFQNQDERHWLESLIHPYVRDRFLKAIAESTSPILVLVIPLLIEVQMTNLVTEIWVVICSESQQLQRLMERNHLTLEQAQARINSQLSLKEKAAIADVVLDNSSSLESLLKQVDIALNFEL.

The DPCK domain maps to 5-196 (IIGLTGGIAT…QVDIALNFEL (192 aa)). 13 to 18 (ATGKTT) serves as a coordination point for ATP.

It belongs to the CoaE family.

It is found in the cytoplasm. The enzyme catalyses 3'-dephospho-CoA + ATP = ADP + CoA + H(+). It functions in the pathway cofactor biosynthesis; coenzyme A biosynthesis; CoA from (R)-pantothenate: step 5/5. Functionally, catalyzes the phosphorylation of the 3'-hydroxyl group of dephosphocoenzyme A to form coenzyme A. The sequence is that of Dephospho-CoA kinase from Trichormus variabilis (strain ATCC 29413 / PCC 7937) (Anabaena variabilis).